The following is a 130-amino-acid chain: Small ribosomal subunit protein uS8 (130 aa).

The protein belongs to the universal ribosomal protein uS8 family. As to quaternary structure, part of the 30S ribosomal subunit.

Its function is as follows. One of the primary rRNA binding proteins, it binds directly to 16S rRNA central domain where it helps coordinate assembly of the platform of the 30S subunit. This chain is Small ribosomal subunit protein uS8, found in Methanococcus maripaludis (strain C7 / ATCC BAA-1331).